A 222-amino-acid polypeptide reads, in one-letter code: Translation initiation factor 6 (222 aa).

The protein belongs to the eIF-6 family.

Binds to the 50S ribosomal subunit and prevents its association with the 30S ribosomal subunit to form the 70S initiation complex. This Methanocorpusculum labreanum (strain ATCC 43576 / DSM 4855 / Z) protein is Translation initiation factor 6.